Here is a 349-residue protein sequence, read N- to C-terminus: Ferredoxin--NADP reductase 1 (349 aa).

FAD-binding residues include Glu36, Lys44, Tyr48, Val88, Leu123, Asp290, and Ser331.

This sequence belongs to the ferredoxin--NADP reductase type 2 family. Homodimer. The cofactor is FAD.

It carries out the reaction 2 reduced [2Fe-2S]-[ferredoxin] + NADP(+) + H(+) = 2 oxidized [2Fe-2S]-[ferredoxin] + NADPH. This is Ferredoxin--NADP reductase 1 from Bacillus cytotoxicus (strain DSM 22905 / CIP 110041 / 391-98 / NVH 391-98).